A 1717-amino-acid polypeptide reads, in one-letter code: DNA-directed RNA polymerase I subunit RPA1 (1717 aa).

The Zn(2+) site is built by Cys64, Cys67, Cys74, His77, Cys104, and Cys107. Positions 110–201 (LTCPRAAIYL…VAQFWKTHMA (92 aa)) are clamp. 2 residues coordinate Zn(2+): Cys205 and Cys208. Positions 327–433 (FTNGQTVNLQ…IRQILEKKEG (107 aa)) are clamp. The tract at residues 410–423 (DSEMDKLMLEKYPG) is rudder. Lys431, Arg436, and Arg443 together coordinate DNA. The interval 475–549 (YPQPVTPWNV…QGTKVVCRHV (75 aa)) is involved in RRN3 binding to Pol I complex. Residue Arg559 coordinates RNA. Positions 595, 597, and 599 each coordinate Mg(2+). Asp599 provides a ligand contact to RNA. The segment at 812–890 (KPNADVVRQR…NEINKACMPL (79 aa)) is funnel. The interval 967–1008 (RPPEFFFHCMAGREGLVDTAVKTSRSGYLQRCIIKHLEGLVI) is bridging helix. Residues 1067–1162 (ADPQKVLGHI…SLSVWRPDIY (96 aa)) are mediates the interaction with TOP2A. Residues 1214 to 1255 (PGEAVGLLAAQSIGEPSTQMTLNTFHFAGRGEMNVTLGIPRL) form a trigger loop region. A DNA-binding site is contributed by Arg1256. Residues 1372–1493 (RNVNSRRATQ…RRHSRPQGAE (122 aa)) form a disordered region. Over residues 1380 to 1397 (TQKDLNDTEDSGRSQREE) the composition is skewed to basic and acidic residues. Ser1393 is modified (phosphoserine). Composition is skewed to acidic residues over residues 1398-1419 (ERDE…DADA) and 1429-1450 (EEEV…EVQE). Residues 1452 to 1464 (GNIKGDGVHQGHE) show a composition bias toward basic and acidic residues. Residues 1465-1477 (PDEEEHLGLEEEE) show a composition bias toward acidic residues.

Belongs to the RNA polymerase beta' chain family. Component of the RNA polymerase I (Pol I) complex consisting of 13 subunits: a ten-subunit catalytic core composed of POLR1A/RPA1, POLR1B/RPA2, POLR1C/RPAC1, POLR1D/RPAC2, POLR1H/RPA12, POLR2E/RPABC1, POLR2F/RPABC2, POLR2H/RPABC3, POLR2K/RPABC4 and POLR2L/RPABC5; a mobile stalk subunit POLR1F/RPA43 protruding from the core and additional subunits homologous to general transcription factors POLR1E/RPA49 and POLR1G/RPA34. Part of Pol I pre-initiation complex (PIC), in which Pol I core assembles with RRN3 and promoter-bound UTBF and SL1/TIF-IB complex. Interacts (via dock II domain) with TOP2A; this interaction may assist Pol I transcription initiation by releasing supercoils occurring during DNA unwinding. Interacts with CAVIN1; this interaction induces the dissociation of Pol I complex paused at rDNA terminator sequences. Interacts with MYO1C. Interacts with ERBB2. Interacts with DDX11. Interacts with RECQL5. The cofactor is Mg(2+). Post-translationally, phosphorylated.

The protein resides in the nucleus. The protein localises to the nucleolus. It localises to the chromosome. It carries out the reaction RNA(n) + a ribonucleoside 5'-triphosphate = RNA(n+1) + diphosphate. Functionally, catalytic core component of RNA polymerase I (Pol I), a DNA-dependent RNA polymerase which synthesizes ribosomal RNA precursors using the four ribonucleoside triphosphates as substrates. Transcribes 47S pre-rRNAs from multicopy rRNA gene clusters, giving rise to 5.8S, 18S and 28S ribosomal RNAs. Pol I-mediated transcription cycle proceeds through transcription initiation, transcription elongation and transcription termination stages. During transcription initiation, Pol I pre-initiation complex (PIC) is recruited by the selectivity factor 1 (SL1/TIF-IB) complex bound to the core promoter that precedes an rDNA repeat unit. The PIC assembly bends the promoter favoring the formation of the transcription bubble and promoter escape. Once the polymerase has escaped from the promoter it enters the elongation phase during which RNA is actively polymerized, based on complementarity with the template DNA strand. Highly processive, assembles in structures referred to as 'Miller trees' where many elongating Pol I complexes queue and transcribe the same rDNA coding regions. At terminator sequences downstream of the rDNA gene, PTRF interacts with Pol I and halts Pol I transcription leading to the release of the RNA transcript and polymerase from the DNA. Forms Pol I active center together with the second largest subunit POLR1B/RPA2. Appends one nucleotide at a time to the 3' end of the nascent RNA, with POLR1A/RPA1 contributing a Mg(2+)-coordinating DxDGD motif, and POLR1B/RPA2 participating in the coordination of a second Mg(2+) ion and providing lysine residues believed to facilitate Watson-Crick base pairing between the incoming nucleotide and the template base. Typically, Mg(2+) ions direct a 5' nucleoside triphosphate to form a phosphodiester bond with the 3' hydroxyl of the preceding nucleotide of the nascent RNA, with the elimination of pyrophosphate. Has proofreading activity: Pauses and backtracks to allow the cleavage of a missincorporated nucleotide via POLR1H/RPA12. High Pol I processivity is associated with decreased transcription fidelity. The chain is DNA-directed RNA polymerase I subunit RPA1 from Mus musculus (Mouse).